The chain runs to 570 residues: Adenine deaminase (570 aa).

The protein belongs to the metallo-dependent hydrolases superfamily. Adenine deaminase family. Mn(2+) is required as a cofactor.

The enzyme catalyses adenine + H2O + H(+) = hypoxanthine + NH4(+). This chain is Adenine deaminase, found in Clostridium acetobutylicum (strain ATCC 824 / DSM 792 / JCM 1419 / IAM 19013 / LMG 5710 / NBRC 13948 / NRRL B-527 / VKM B-1787 / 2291 / W).